The following is a 263-amino-acid chain: Phosphatidylglycerol--prolipoprotein diacylglyceryl transferase (263 aa).

4 consecutive transmembrane segments (helical) span residues 6-26 (VIFSIGPVSIYWYSLAYVLGI), 50-70 (LLTATIVGIILGGRLGYVLIY), 85-105 (TWEGGMSFHGGAIGVLLAVII), and 112-132 (IPIFYALDLVSCGVPIGLFLG). Arg133 provides a ligand contact to a 1,2-diacyl-sn-glycero-3-phospho-(1'-sn-glycerol). 3 consecutive transmembrane segments (helical) span residues 169 to 189 (LYEALFEGLLLFAVANSLFFL), 197 to 217 (GALTGIAVMWYGIARFFVEFF), and 233 to 253 (MGQLLSIPMVLLGMLVYLGAL).

Belongs to the Lgt family.

The protein localises to the cell membrane. The catalysed reaction is L-cysteinyl-[prolipoprotein] + a 1,2-diacyl-sn-glycero-3-phospho-(1'-sn-glycerol) = an S-1,2-diacyl-sn-glyceryl-L-cysteinyl-[prolipoprotein] + sn-glycerol 1-phosphate + H(+). It functions in the pathway protein modification; lipoprotein biosynthesis (diacylglyceryl transfer). In terms of biological role, catalyzes the transfer of the diacylglyceryl group from phosphatidylglycerol to the sulfhydryl group of the N-terminal cysteine of a prolipoprotein, the first step in the formation of mature lipoproteins. The polypeptide is Phosphatidylglycerol--prolipoprotein diacylglyceryl transferase (Wolbachia sp. subsp. Drosophila simulans (strain wRi)).